A 116-amino-acid chain; its full sequence is Methionine-R-sulfoxide reductase B1 (116 aa).

The region spanning 1–106 (MSFCSFFGGE…FSSSLKFIPK (106 aa)) is the MsrB domain. Zn(2+) is bound by residues Cys23, Cys26, Cys71, and Cys74. The active-site Nucleophile is the Sec95. Sec95 is a non-standard amino acid (selenocysteine).

The protein belongs to the MsrB Met sulfoxide reductase family. Requires Zn(2+) as cofactor. Post-translationally, truncated MSRB1/SEPX1 proteins produced by failed UGA/Sec decoding are ubiquitinated by the CRL2(FEM1C) E3 ubiquitin-protein ligase complex.

It localises to the cytoplasm. Its subcellular location is the nucleus. The protein resides in the cytoskeleton. The enzyme catalyses L-methionyl-[protein] + [thioredoxin]-disulfide + H2O = L-methionyl-(R)-S-oxide-[protein] + [thioredoxin]-dithiol. It catalyses the reaction [thioredoxin]-disulfide + L-methionine + H2O = L-methionine (R)-S-oxide + [thioredoxin]-dithiol. Its function is as follows. Methionine-sulfoxide reductase that specifically reduces methionine (R)-sulfoxide back to methionine. While in many cases, methionine oxidation is the result of random oxidation following oxidative stress, methionine oxidation is also a post-translational modification that takes place on specific residue. Acts as a regulator of actin assembly by reducing methionine (R)-sulfoxide mediated by MICALs (MICAL1, MICAL2 or MICAL3) on actin, thereby promoting filament repolymerization. Plays a role in innate immunity by reducing oxidized actin, leading to actin repolymerization in macrophages. The chain is Methionine-R-sulfoxide reductase B1 (Msrb1) from Rattus norvegicus (Rat).